The following is a 221-amino-acid chain: Endo-1,4-beta-xylanase I (221 aa).

Residues 1 to 30 (MVSFTSIITAAVAATGALAAPATDVSLVAR) form the signal peptide. In terms of domain architecture, GH11 spans 31-219 (QNTPNGEGTH…STGNAQITVN (189 aa)). Catalysis depends on E115, which acts as the Nucleophile. Residues 126–157 (DPSSQSQNKGTVTSDGSSYKIAQSTRTNQPSI) are disordered. The active-site Proton donor is E206.

The protein belongs to the glycosyl hydrolase 11 (cellulase G) family. The N-terminus is blocked.

Its subcellular location is the secreted. The catalysed reaction is Endohydrolysis of (1-&gt;4)-beta-D-xylosidic linkages in xylans.. Its pathway is glycan degradation; xylan degradation. Functionally, major xylan-degrading enzyme. Contributes to the hydrolysis of arabinoxylan, the major component of maize cell-walls. The chain is Endo-1,4-beta-xylanase I (XYL1) from Cochliobolus carbonum (Maize leaf spot fungus).